Consider the following 99-residue polypeptide: Putative pterin-4-alpha-carbinolamine dehydratase (99 aa).

This sequence belongs to the pterin-4-alpha-carbinolamine dehydratase family.

The catalysed reaction is (4aS,6R)-4a-hydroxy-L-erythro-5,6,7,8-tetrahydrobiopterin = (6R)-L-erythro-6,7-dihydrobiopterin + H2O. In Synechococcus sp. (strain CC9311), this protein is Putative pterin-4-alpha-carbinolamine dehydratase.